Here is a 161-residue protein sequence, read N- to C-terminus: Cyclic pyranopterin monophosphate synthase (161 aa).

Substrate contacts are provided by residues 75 to 77 and 115 to 116; these read MCH and ME. The active site involves Asp130.

Belongs to the MoaC family. As to quaternary structure, homohexamer; trimer of dimers.

It carries out the reaction (8S)-3',8-cyclo-7,8-dihydroguanosine 5'-triphosphate = cyclic pyranopterin phosphate + diphosphate. The protein operates within cofactor biosynthesis; molybdopterin biosynthesis. Functionally, catalyzes the conversion of (8S)-3',8-cyclo-7,8-dihydroguanosine 5'-triphosphate to cyclic pyranopterin monophosphate (cPMP). In Bacillus cereus (strain 03BB102), this protein is Cyclic pyranopterin monophosphate synthase.